Consider the following 177-residue polypeptide: Adenylate kinase (177 aa).

13–18 (GCGKGT) contributes to the ATP binding site. The NMP stretch occupies residues 33–62 (SSGDIIREEMKKSSKEATVIREMVNSGRLA). AMP contacts are provided by residues Ser-34, Arg-39, 60 to 62 (RLA), 85 to 88 (GYPR), and Gln-92. The tract at residues 119–127 (GRNEGRDDD) is LID. Residue Arg-120 coordinates ATP. AMP is bound by residues Arg-124 and Arg-135.

The protein belongs to the adenylate kinase family. Monomer.

The protein resides in the cytoplasm. The enzyme catalyses AMP + ATP = 2 ADP. Functionally, catalyzes the reversible transfer of the terminal phosphate group between ATP and AMP. Plays an important role in cellular energy homeostasis and in adenine nucleotide metabolism. The chain is Adenylate kinase from Encephalitozoon cuniculi (strain GB-M1) (Microsporidian parasite).